The chain runs to 385 residues: Tetraacyldisaccharide 4'-kinase (385 aa).

Position 60 to 67 (threonine 60 to threonine 67) interacts with ATP.

The protein belongs to the LpxK family.

It carries out the reaction a lipid A disaccharide + ATP = a lipid IVA + ADP + H(+). Its pathway is glycolipid biosynthesis; lipid IV(A) biosynthesis; lipid IV(A) from (3R)-3-hydroxytetradecanoyl-[acyl-carrier-protein] and UDP-N-acetyl-alpha-D-glucosamine: step 6/6. Its function is as follows. Transfers the gamma-phosphate of ATP to the 4'-position of a tetraacyldisaccharide 1-phosphate intermediate (termed DS-1-P) to form tetraacyldisaccharide 1,4'-bis-phosphate (lipid IVA). The protein is Tetraacyldisaccharide 4'-kinase of Psychrobacter arcticus (strain DSM 17307 / VKM B-2377 / 273-4).